Consider the following 264-residue polypeptide: Ribosomal protein L11 methyltransferase (264 aa).

Residues Thr116, Gly137, Asp159, and Asn200 each coordinate S-adenosyl-L-methionine.

The protein belongs to the methyltransferase superfamily. PrmA family.

The protein resides in the cytoplasm. The catalysed reaction is L-lysyl-[protein] + 3 S-adenosyl-L-methionine = N(6),N(6),N(6)-trimethyl-L-lysyl-[protein] + 3 S-adenosyl-L-homocysteine + 3 H(+). Its function is as follows. Methylates ribosomal protein L11. This Thermotoga petrophila (strain ATCC BAA-488 / DSM 13995 / JCM 10881 / RKU-1) protein is Ribosomal protein L11 methyltransferase.